Consider the following 1342-residue polypeptide: DNA-directed RNA polymerase subunit beta (1342 aa).

It belongs to the RNA polymerase beta chain family. In terms of assembly, the RNAP catalytic core consists of 2 alpha, 1 beta, 1 beta' and 1 omega subunit. When a sigma factor is associated with the core the holoenzyme is formed, which can initiate transcription.

The enzyme catalyses RNA(n) + a ribonucleoside 5'-triphosphate = RNA(n+1) + diphosphate. Its function is as follows. DNA-dependent RNA polymerase catalyzes the transcription of DNA into RNA using the four ribonucleoside triphosphates as substrates. The polypeptide is DNA-directed RNA polymerase subunit beta (Pectobacterium carotovorum subsp. carotovorum (strain PC1)).